Consider the following 793-residue polypeptide: Probable phosphoketolase 2 (793 aa).

It belongs to the XFP family. Requires thiamine diphosphate as cofactor.

In Nostoc sp. (strain PCC 7120 / SAG 25.82 / UTEX 2576), this protein is Probable phosphoketolase 2.